Here is a 340-residue protein sequence, read N- to C-terminus: Short-chain dehydrogenase/reductase prx1 (340 aa).

NADP(+) is bound by residues I60, K84, D104, N131, and K162. Catalysis depends on S184, which acts as the Proton donor. Residues Y210 and K214 each contribute to the NADP(+) site. Residue Y210 is the Proton acceptor of the active site. K214 serves as the catalytic Lowers pKa of active site Tyr.

This sequence belongs to the short-chain dehydrogenases/reductases (SDR) family.

It functions in the pathway sesquiterpene biosynthesis. Functionally, short-chain dehydrogenase/reductase; part of the gene cluster that mediates the biosynthesis of PR-toxin, a bicyclic sesquiterpene belonging to the eremophilane class and acting as a mycotoxin. The first step of the pathway is catalyzed by the aristolochene synthase which performs the cyclization of trans,trans-farnesyl diphosphate (FPP) to the bicyclic sesquiterpene aristolochene. Following the formation of aristolochene, the non-oxygenated aristolochene is converted to the trioxygenated intermediate eremofortin B, via 7-epi-neopetasone. This conversion appears to involve three enzymes, a hydroxysterol oxidase-like enzyme, the quinone-oxidase prx3 that forms the quinone-type-structure in the bicyclic nucleus of aristolochene with the C8-oxo group and the C-3 hydroxyl group, and the P450 monooxygenase prx9 that introduces the epoxide at the double bond between carbons 1 and 2. No monoxy or dioxy-intermediates have been reported to be released to the broth, so these three early oxidative reactions may be coupled together. Eremofortin B is further oxidized by another P450 monooxygenase, that introduces a second epoxide between carbons 7 and 11 prior to acetylation to eremofortin A by the acetyltransferase prx11. The second epoxidation may be performed by a second P450 monooxygenase. After the acetylation step, eremofortin A is converted to eremofortin C and then to PR-toxin. First the conversion of eremofortin A to eremofortin C proceeds by oxidation of the side chain of the molecule at C-12 and is catalyzed by the short-chain oxidoreductase prx1. The cytochrome P450 monooxygenase prx8 also plays a role in this step. The primary alcohol formed at C-12 is finally oxidized by the short-chain alcohol dehydrogenase prx4 that forms PR-toxin. This chain is Short-chain dehydrogenase/reductase prx1, found in Penicillium rubens (strain ATCC 28089 / DSM 1075 / NRRL 1951 / Wisconsin 54-1255) (Penicillium chrysogenum).